Here is a 203-residue protein sequence, read N- to C-terminus: Glycerol-3-phosphate acyltransferase (203 aa).

6 helical membrane-spanning segments follow: residues Ile-3–Ser-23, Lys-51–Val-71, Phe-74–Leu-94, Ala-116–Phe-136, Ser-140–Thr-160, and Pro-164–Trp-178.

It belongs to the PlsY family. As to quaternary structure, probably interacts with PlsX.

Its subcellular location is the cell inner membrane. It carries out the reaction an acyl phosphate + sn-glycerol 3-phosphate = a 1-acyl-sn-glycero-3-phosphate + phosphate. The protein operates within lipid metabolism; phospholipid metabolism. In terms of biological role, catalyzes the transfer of an acyl group from acyl-phosphate (acyl-PO(4)) to glycerol-3-phosphate (G3P) to form lysophosphatidic acid (LPA). This enzyme utilizes acyl-phosphate as fatty acyl donor, but not acyl-CoA or acyl-ACP. The polypeptide is Glycerol-3-phosphate acyltransferase (Burkholderia pseudomallei (strain K96243)).